Here is a 339-residue protein sequence, read N- to C-terminus: Annexin A2 (339 aa).

Residue serine 2 is modified to N-acetylserine. The S100A10-binding site stretch occupies residues 2–24 (STVHEILCKLSLEGDHSTPPSAY). Tyrosine 24 bears the Phosphotyrosine; by SRC mark. Serine 26 bears the Phosphoserine; by PKC mark. Annexin repeat units follow at residues 33-104 (FDAE…GLLK) and 105-176 (TPAQ…ALAK). Lysine 49 bears the N6-acetyllysine; alternate mark. Lysine 49 participates in a covalent cross-link: Glycyl lysine isopeptide (Lys-Gly) (interchain with G-Cter in SUMO1); alternate. Residue lysine 49 forms a Glycyl lysine isopeptide (Lys-Gly) (interchain with G-Cter in SUMO2); alternate linkage. Lysine 152 bears the N6-acetyllysine mark. A Phosphoserine modification is found at serine 184. Annexin repeat units follow at residues 189–261 (ELID…NLVQ) and 265–336 (NKPL…YLCG). Position 199 is a phosphotyrosine (tyrosine 199). N6-acetyllysine is present on lysine 227.

It belongs to the annexin family. As to quaternary structure, heterotetramer containing 2 light chains of S100A10/p11 and 2 heavy chains of ANXA2/p36. Interacts with ATP1B1. Interacts with DYSF. Interacts with COCH. Interacts (via repeat Annexin 1) with PCSK9 (via the C-terminal domain); the interaction inhibits the degradation of LDLR. Interacts with CEACAM1 (via the cytoplasmic domain); this interaction is regulated by phosphorylation of CEACAM1. Interacts with APPL2 and APPL1; targets APPL2 to endosomes and acting in parallel to RAB5A. Interacts with S100A4. May interact with UBAP2. Interacts with PLEKHG4B; this interaction is required for PLEKHG4B localization to cell-cell adhesions. In terms of processing, ISGylated.

It is found in the secreted. Its subcellular location is the extracellular space. It localises to the extracellular matrix. The protein localises to the basement membrane. The protein resides in the melanosome. In terms of biological role, calcium-regulated membrane-binding protein whose affinity for calcium is greatly enhanced by anionic phospholipids. It binds two calcium ions with high affinity. May be involved in heat-stress response. Inhibits PCSK9-enhanced LDLR degradation, probably reduces PCSK9 protein levels via a translational mechanism but also competes with LDLR for binding with PCSK9. Binds to endosomes damaged by phagocytosis of particulate wear debris and participates in endosomal membrane stabilization, thereby limiting NLRP3 inflammasome activation. Required for endothelial cell surface plasmin generation and may support fibrinolytic surveillance and neoangiogenesis. This chain is Annexin A2 (ANXA2), found in Bos taurus (Bovine).